Consider the following 396-residue polypeptide: Interleukin-3 receptor subunit alpha (396 aa).

A signal peptide spans 1 to 16; the sequence is MAANLWLILGLLASHS. At 17–331 the chain is on the extracellular side; it reads SDLAAVREAP…VCPPEVMPVK (315 aa). 5 disulfides stabilise this stretch: cysteine 62–cysteine 79, cysteine 87–cysteine 223, cysteine 125–cysteine 134, cysteine 165–cysteine 187, and cysteine 245–cysteine 323. N-linked (GlcNAc...) asparagine glycosylation is present at asparagine 91. N-linked (GlcNAc...) asparagine glycans are attached at residues asparagine 213, asparagine 246, asparagine 272, and asparagine 283. The WSXWS motif signature appears at 312–316; sequence LSSWS. Residues 332-355 form a helical membrane-spanning segment; the sequence is TALVTSVATVLGAGLVAAGLLLWW. At 356–396 the chain is on the cytoplasmic side; the sequence is RKSLLYRLCPPIPRLRLPLAGEMVVWEPALEDCEVTPVTDA. A Glycyl lysine isopeptide (Lys-Gly) (interchain with G-Cter in ubiquitin) cross-link involves residue lysine 357. A Box 1 motif motif is present at residues 363-371; that stretch reads LCPPIPRLR.

Belongs to the type I cytokine receptor family. Type 5 subfamily. In terms of assembly, interacts with IL3. Heterodimer of an alpha and a beta subunit. The beta subunit is common to the IL3, IL5 and GM-CSF receptors. Post-translationally, ubiquitinated at Lys-357 by RNFT2 in response to IL3. Ubiquitination leads ligand-induced degradation by the proteasome. Ubiquitinated by RNF128 via 'Lys-27'-linked polyubiquitination, facilitating its degradation through the lysosomal pathway.

The protein localises to the cell membrane. It localises to the endomembrane system. Functionally, cell surface receptor for IL3 expressed on hematopoietic progenitor cells, monocytes and B-lymphocytes that controls the production and differentiation of hematopoietic progenitor cells into lineage-restricted cells. Ligand stimulation rapidly induces hetrodimerization with IL3RB, phosphorylation and enzyme activity of effector proteins such as JAK2 and PI3K that play a role in signaling cell proliferation and differentiation. Activation of JAK2 leads to STAT5-mediated transcriptional program. This is Interleukin-3 receptor subunit alpha (Il3ra) from Mus musculus (Mouse).